A 297-amino-acid polypeptide reads, in one-letter code: uncharacterized protein (297 aa).

Positions 1–60 constitute an HTH lysR-type domain; that stretch reads MNIELRHLRYFVAVAEELHFGRAAARLNISQPPLSQQIQALEQQIGARLLARTNRSVLLT. Residues 20 to 40 constitute a DNA-binding region (H-T-H motif); the sequence is FGRAAARLNISQPPLSQQIQA.

This sequence belongs to the LysR transcriptional regulatory family.

This is an uncharacterized protein from Escherichia coli (strain K12).